A 940-amino-acid polypeptide reads, in one-letter code: Isoleucine--tRNA ligase (940 aa).

The short motif at 58 to 68 (PYANGSIHIGH) is the 'HIGH' region element. Glutamate 564 contributes to the L-isoleucyl-5'-AMP binding site. Positions 605–609 (KMSKS) match the 'KMSKS' region motif. Lysine 608 is a binding site for ATP. Cysteine 903, cysteine 906, cysteine 923, and cysteine 926 together coordinate Zn(2+).

This sequence belongs to the class-I aminoacyl-tRNA synthetase family. IleS type 1 subfamily. Monomer. It depends on Zn(2+) as a cofactor.

Its subcellular location is the cytoplasm. It carries out the reaction tRNA(Ile) + L-isoleucine + ATP = L-isoleucyl-tRNA(Ile) + AMP + diphosphate. In terms of biological role, catalyzes the attachment of isoleucine to tRNA(Ile). As IleRS can inadvertently accommodate and process structurally similar amino acids such as valine, to avoid such errors it has two additional distinct tRNA(Ile)-dependent editing activities. One activity is designated as 'pretransfer' editing and involves the hydrolysis of activated Val-AMP. The other activity is designated 'posttransfer' editing and involves deacylation of mischarged Val-tRNA(Ile). This chain is Isoleucine--tRNA ligase, found in Shewanella amazonensis (strain ATCC BAA-1098 / SB2B).